A 550-amino-acid polypeptide reads, in one-letter code: Hydroxylamine reductase (550 aa).

Positions 3, 6, 18, and 25 each coordinate [2Fe-2S] cluster. 8 residues coordinate hybrid [4Fe-2O-2S] cluster: H249, E273, C317, C405, C433, C458, E492, and K494. Residue C405 is modified to Cysteine persulfide.

The protein belongs to the HCP family. The cofactor is [2Fe-2S] cluster. Requires hybrid [4Fe-2O-2S] cluster as cofactor.

It localises to the cytoplasm. It carries out the reaction A + NH4(+) + H2O = hydroxylamine + AH2 + H(+). Functionally, catalyzes the reduction of hydroxylamine to form NH(3) and H(2)O. This Yersinia pseudotuberculosis serotype IB (strain PB1/+) protein is Hydroxylamine reductase.